Reading from the N-terminus, the 518-residue chain is Bifunctional methyltransferase (518 aa).

The hemK stretch occupies residues 1–300; the sequence is MQYSIKQILN…SHNRVIEISP (300 aa). An RF MTase region spans residues 1–302; it reads MQYSIKQILN…NRVIEISPIN (302 aa). Residues 140–144, Asp163, Trp192, Asn207, Glu347, Glu372, Asn399, and Asp421 each bind S-adenosyl-L-methionine; that span reads GTGSG. 207–210 is a substrate binding site; sequence NPPY. The interval 301 to 518 is tRNA (guanine-N(7)-)-methyltransferase; that stretch reads INLNRSYARR…MILQHALTGH (218 aa). The tRNA MTase stretch occupies residues 305 to 518; the sequence is RSYARRIGKS…MILQHALTGH (214 aa). Residue Asp421 is part of the active site. Substrate contacts are provided by Lys425 and Asp457.

In the C-terminal section; belongs to the class I-like SAM-binding methyltransferase superfamily. TrmB family. This sequence in the N-terminal section; belongs to the protein N5-glutamine methyltransferase family. PrmC subfamily.

It catalyses the reaction L-glutaminyl-[peptide chain release factor] + S-adenosyl-L-methionine = N(5)-methyl-L-glutaminyl-[peptide chain release factor] + S-adenosyl-L-homocysteine + H(+). The catalysed reaction is guanosine(46) in tRNA + S-adenosyl-L-methionine = N(7)-methylguanosine(46) in tRNA + S-adenosyl-L-homocysteine. In terms of biological role, methylates the class 1 translation termination release factors RF1/PrfA and RF2/PrfB on the glutamine residue of the universally conserved GGQ motif. Its function is as follows. Catalyzes the formation of N(7)-methylguanine at position 46 (m7G46) in tRNA. The protein is Bifunctional methyltransferase (prmC/trmB) of Rickettsia typhi (strain ATCC VR-144 / Wilmington).